Consider the following 465-residue polypeptide: tRNA modification GTPase MnmE (465 aa).

(6S)-5-formyl-5,6,7,8-tetrahydrofolate-binding residues include Arg-21, Glu-85, and Lys-124. The region spanning 220 to 387 (GVPVAIIGET…LQQRLVAAAH (168 aa)) is the TrmE-type G domain. Residue Asn-230 participates in K(+) binding. GTP contacts are provided by residues 230–235 (NAGKST), 249–255 (SDIHGTT), and 274–277 (DTAG). A Mg(2+)-binding site is contributed by Ser-234. 3 residues coordinate K(+): Ser-249, Ile-251, and Thr-254. Mg(2+) is bound at residue Thr-255. Lys-465 is a binding site for (6S)-5-formyl-5,6,7,8-tetrahydrofolate.

The protein belongs to the TRAFAC class TrmE-Era-EngA-EngB-Septin-like GTPase superfamily. TrmE GTPase family. Homodimer. Heterotetramer of two MnmE and two MnmG subunits. Requires K(+) as cofactor.

Its subcellular location is the cytoplasm. Functionally, exhibits a very high intrinsic GTPase hydrolysis rate. Involved in the addition of a carboxymethylaminomethyl (cmnm) group at the wobble position (U34) of certain tRNAs, forming tRNA-cmnm(5)s(2)U34. This is tRNA modification GTPase MnmE from Bacteroides fragilis (strain ATCC 25285 / DSM 2151 / CCUG 4856 / JCM 11019 / LMG 10263 / NCTC 9343 / Onslow / VPI 2553 / EN-2).